We begin with the raw amino-acid sequence, 598 residues long: MPCVQAQYGSSPQGASPASQGYSYHSSGEYSSDFLTPEFVKFSMDLTNTEITATTSLPSFSTFMDNYSTGYDVKPPCLYQMPLSGQQSSIKVEDIQMHNYQQHSHLPPQSEEMMPHSGSVYYKPSSPPTPTTPGFQVQHSPMWDDPGSLHNFHQNYVATTHMIEQRKTPVSRLSLFSFKQSPPGTPVSSCQMRFDGPLHVPMNPEPAGSHHVVDGQTFAVPNPIRKPASMGFPGLQIGHASQLLDTQVPSPPSRGSPSNEGLCAVCGDNAACQHYGVRTCEGCKGFFKRTVQKNAKYVCLANKNCPVDKRRRNRCQYCRFQKCLAVGMVKEVVRTDSLKGRRGRLPSKPKSPQEPSPPSPPVSLISALVRAHVDSNPAMTSLDYSRFQANPDYQMSGDDTQHIQQFYDLLTGSMEIIRGWAEKIPGFADLPKADQDLLFESAFLELFVLRLAYRSNPVEGKLIFCNGVVLHRLQCVRGFGEWIDSIVEFSSNLQNMNIDISAFSCIAALAMVTERHWLKEPKRVEELQNKIVNCLKDHVTFNNGGLNRPNYLSKLLGKLPELRTLCTQGLQRIFYLKLEDLVPPPAIIDKLFLDTLPF.

Positions 1–22 (MPCVQAQYGSSPQGASPASQGY) are disordered. Over residues 7–18 (QYGSSPQGASPA) the composition is skewed to polar residues. The nuclear receptor DNA-binding region spans 260 to 335 (EGLCAVCGDN…VGMVKEVVRT (76 aa)). NR C4-type zinc fingers lie at residues 263 to 283 (CAVCGDNAACQHYGVRTCEGC) and 299 to 318 (CLANKNCPVDKRRRNRCQYC). The Bipartite nuclear localization signal (NLS1) signature appears at 287-314 (FKRTVQKNAKYVCLANKNCPVDKRRRNR). The disordered stretch occupies residues 337 to 361 (SLKGRRGRLPSKPKSPQEPSPPSPP). The Nuclear localization signal (NLS1) motif lies at 338–350 (LKGRRGRLPSKPK). The span at 352–361 (PQEPSPPSPP) shows a compositional bias: pro residues. Residues 360 to 595 (PPVSLISALV…AIIDKLFLDT (236 aa)) form the NR LBD domain. Positions 443–452 (FLELFVLRLA) match the nuclear export sequence (NES1) motif. The nuclear export sequence (NES2) signature appears at 568–577 (QGLQRIFYLK).

The protein belongs to the nuclear hormone receptor family. In terms of assembly, interacts with SFPQ, NCOR2, SIN3A and HADC1. The interaction with NCOR2 increases in the absence of PITX3. Interacts with PER2.

The protein localises to the cytoplasm. Its subcellular location is the nucleus. In terms of biological role, transcriptional regulator which is important for the differentiation and maintenance of meso-diencephalic dopaminergic (mdDA) neurons during development. It is crucial for expression of a set of genes such as SLC6A3, SLC18A2, TH and DRD2 which are essential for development of mdDA neurons. This chain is Nuclear receptor subfamily 4 group A member 2 (NR4A2), found in Pongo abelii (Sumatran orangutan).